The following is a 272-amino-acid chain: Shikimate dehydrogenase (NADP(+)) (272 aa).

Shikimate contacts are provided by residues 14–16 and T61; that span reads SKS. K65 acts as the Proton acceptor in catalysis. E77 provides a ligand contact to NADP(+). 2 residues coordinate shikimate: N86 and D102. NADP(+) contacts are provided by residues 126–130, 149–154, and M213; these read GAGGA and NRTASR. Y215 contributes to the shikimate binding site. An NADP(+)-binding site is contributed by G237.

Belongs to the shikimate dehydrogenase family. In terms of assembly, homodimer.

It carries out the reaction shikimate + NADP(+) = 3-dehydroshikimate + NADPH + H(+). Its pathway is metabolic intermediate biosynthesis; chorismate biosynthesis; chorismate from D-erythrose 4-phosphate and phosphoenolpyruvate: step 4/7. Involved in the biosynthesis of the chorismate, which leads to the biosynthesis of aromatic amino acids. Catalyzes the reversible NADPH linked reduction of 3-dehydroshikimate (DHSA) to yield shikimate (SA). The protein is Shikimate dehydrogenase (NADP(+)) of Salmonella enteritidis PT4 (strain P125109).